We begin with the raw amino-acid sequence, 453 residues long: Retroviral integration site protein Fli-1 homolog (453 aa).

The 87-residue stretch at 111–197 (PPPPNMTTNE…SHLNYLRDSS (87 aa)) folds into the PNT domain. A compositionally biased stretch (polar residues) spans 201–214 (GYNTQAHTDQSSRL). The segment at 201–273 (GYNTQAHTDQ…YQILGPTSSR (73 aa)) is disordered. Residues 215-226 (TAKEDPSYEAVR) are compositionally biased toward basic and acidic residues. 2 stretches are compositionally biased toward polar residues: residues 230 to 239 (WGNSMSSPVT) and 246 to 273 (GTQN…TSSR). The segment at residues 282-362 (IQLWQFLLEL…HGKRYAYKFD (81 aa)) is a DNA-binding region (ETS).

It belongs to the ETS family.

Its subcellular location is the nucleus. The protein is Retroviral integration site protein Fli-1 homolog (fli1) of Xenopus laevis (African clawed frog).